Here is a 126-residue protein sequence, read N- to C-terminus: Large-conductance mechanosensitive channel (126 aa).

The next 2 membrane-spanning stretches (helical) occupy residues 8–28 (FAMR…AAFT) and 70–90 (IQQI…VKVI).

This sequence belongs to the MscL family. Homopentamer.

Its subcellular location is the cell membrane. Channel that opens in response to stretch forces in the membrane lipid bilayer. May participate in the regulation of osmotic pressure changes within the cell. In Exiguobacterium sp. (strain ATCC BAA-1283 / AT1b), this protein is Large-conductance mechanosensitive channel.